The chain runs to 122 residues: Ribosome-binding factor A (122 aa).

This sequence belongs to the RbfA family. As to quaternary structure, monomer. Binds 30S ribosomal subunits, but not 50S ribosomal subunits or 70S ribosomes.

The protein localises to the cytoplasm. One of several proteins that assist in the late maturation steps of the functional core of the 30S ribosomal subunit. Associates with free 30S ribosomal subunits (but not with 30S subunits that are part of 70S ribosomes or polysomes). Required for efficient processing of 16S rRNA. May interact with the 5'-terminal helix region of 16S rRNA. The polypeptide is Ribosome-binding factor A (Dichelobacter nodosus (strain VCS1703A)).